A 1004-amino-acid chain; its full sequence is Outer cell wall protein (1004 aa).

Residues 1–24 (MNKKVVLSVLSTTLVASVAASAFA) form the signal peptide.

As to quaternary structure, the outer cell wall layer is composed of subunits of the outer cell wall protein. These proteins form a hexagonal array with a lattice constant of 14.5 nm in the outer cell wall layers.

It localises to the secreted. The protein resides in the cell wall. It is found in the S-layer. The outer wall protein binds to the middle cell wall protein. This Brevibacillus brevis (strain 47 / JCM 6285 / NBRC 100599) protein is Outer cell wall protein.